Consider the following 469-residue polypeptide: Trigger factor (469 aa).

The PPIase FKBP-type domain maps to 165-250 (GDCVTIDYLG…VKAISKPDEL (86 aa)). Over residues 439–460 (EYDESDLTEKKPEKKKGVEKTP) the composition is skewed to basic and acidic residues. The disordered stretch occupies residues 439–469 (EYDESDLTEKKPEKKKGVEKTPIRKKAPKKG).

The protein belongs to the FKBP-type PPIase family. Tig subfamily.

It is found in the cytoplasm. It catalyses the reaction [protein]-peptidylproline (omega=180) = [protein]-peptidylproline (omega=0). Its function is as follows. Involved in protein export. Acts as a chaperone by maintaining the newly synthesized protein in an open conformation. Functions as a peptidyl-prolyl cis-trans isomerase. The sequence is that of Trigger factor from Bartonella quintana (strain Toulouse) (Rochalimaea quintana).